Reading from the N-terminus, the 47-residue chain is NADH dehydrogenase [ubiquinone] iron-sulfur protein 2 (47 aa).

This sequence belongs to the complex I 49 kDa subunit family. As to quaternary structure, complex I is composed of about 45 different subunits. This is a component of the iron-sulfur (IP) fragment of the enzyme.

The protein resides in the mitochondrion inner membrane. The catalysed reaction is a ubiquinone + NADH + 5 H(+)(in) = a ubiquinol + NAD(+) + 4 H(+)(out). In terms of biological role, core subunit of the mitochondrial membrane respiratory chain NADH dehydrogenase (Complex I) that is believed to belong to the minimal assembly required for catalysis. Complex I functions in the transfer of electrons from NADH to the respiratory chain. The immediate electron acceptor for the enzyme is believed to be ubiquinone. Component of the iron-sulfur (IP) fragment of the enzyme. The sequence is that of NADH dehydrogenase [ubiquinone] iron-sulfur protein 2 (NAD7) from Solanum tuberosum (Potato).